We begin with the raw amino-acid sequence, 78 residues long: Small integral membrane protein 5 (78 aa).

A helical membrane pass occupies residues 32-52 (ILAFSVLVVFTATVVLLLLIA).

It is found in the membrane. The sequence is that of Small integral membrane protein 5 (SMIM5) from Bos taurus (Bovine).